The chain runs to 320 residues: Rhomboid-like protein 17, chloroplastic (320 aa).

The transit peptide at 1 to 87 directs the protein to the chloroplast; the sequence is MHAIFSSFSR…LKFGNVMESR (87 aa). Transmembrane regions (helical) follow at residues 116-136, 160-180, 199-219, 247-267, and 295-315; these read WING…AVFT, LITS…MIGI, LYFA…ALLA, MFAI…YFAL, and IASS…WARI.

It belongs to the peptidase S54 family.

The protein resides in the plastid. It localises to the chloroplast membrane. Functionally, probable rhomboid-type serine protease that catalyzes intramembrane proteolysis. In Arabidopsis thaliana (Mouse-ear cress), this protein is Rhomboid-like protein 17, chloroplastic.